The primary structure comprises 465 residues: Putative multidrug resistance protein MdtD (465 aa).

Helical transmembrane passes span 12 to 32 (LWIV…VNTA), 49 to 69 (SVIV…GWLA), 72 to 92 (IGVK…SLMC), 102 to 124 (ILSR…LTVM), 138 to 158 (FVTL…GFLV), 165 to 185 (WIFL…LLLM), 195 to 215 (FDIS…LALD), 219 to 239 (GLGL…IALG), 267 to 287 (LVGS…TPIF), 290 to 310 (IGLG…IIGS), 342 to 362 (LSLP…VLFF), 393 to 413 (LLSM…GILL), and 430 to 450 (SAFL…ALIF).

The protein belongs to the major facilitator superfamily. TCR/Tet family.

It is found in the cell inner membrane. The sequence is that of Putative multidrug resistance protein MdtD from Yersinia pseudotuberculosis serotype O:1b (strain IP 31758).